The chain runs to 4456 residues: Dynein axonemal heavy chain 2 (4456 aa).

Positions 1–12 are enriched in basic residues; that stretch reads MASKAEKKRKVA. A disordered region spans residues 1 to 55; the sequence is MASKAEKKRKVAGRGGARAGRVVRAPQSTAGPGATEASLLPDGQEPEPESGKEDS. Residues 1-1795 are stem; that stretch reads MASKAEKKRK…RQTNTQFQYG (1795 aa). Residues 1218 to 1274 adopt a coiled-coil conformation; it reads LDQIAQMRAMLMAMRDEENNLRSNLGIFKIEQPVSKDLQILEKELDALQQVWEITRD. The TPR 1 repeat unit spans residues 1439–1474; sequence EDNQVALSTMKASRFVKAFEKDVDHWERCLSLILEV. AAA regions lie at residues 1794-2015, 2075-2302, 2407-2654, and 2751-3003; these read YGYE…LLRY, DTIE…DNCN, RYPP…VFQG, and EYNL…LRRY. Residues 1832–1839, 2113–2120, and 2445–2452 contribute to the ATP site; these read GPAGTGKT, GGTGSSKT, and GPVGTGKT. Residues 2750 to 2783 form a TPR 2 repeat; sequence NEYNLSPSVVPMQLVLFREAIEHITRIVRVIGQP. Position 2791–2798 (2791–2798) interacts with ATP; it reads GIGGSGRQ. A stalk region spans residues 3018-3301; sequence YKKLLGEKRQ…EELRKKSEEM (284 aa). A coiled-coil region spans residues 3041–3078; that stretch reads FKIDETREKVEVMSLELEDAKKKVAEFQKQCEEYLVII. One copy of the TPR 3 repeat lies at 3101–3134; that stretch reads IEEVKCQALADNAQKDLEEALPALEEAMRALESL. Coiled-coil stretches lie at residues 3245 to 3333 and 3552 to 3596; these read KRIR…EEDL and VRKE…GSLL. AAA regions lie at residues 3387–3617 and 3833–4052; these read LTNP…EVTE and VTSF…LLSL. 2 TPR repeats span residues 4101–4134 and 4135–4169; these read TTPF…LPSM and DPPE…QPQI.

Belongs to the dynein heavy chain family. As to quaternary structure, part of the axonemal inner dynein arm complex that consists of at least two heavy chains and a number of intermediate and light chains. Interacts with DNAI4.

It is found in the cytoplasm. Its subcellular location is the cytoskeleton. The protein localises to the cilium axoneme. It localises to the flagellum axoneme. In terms of biological role, as part of the axonemal inner dynein arm complex plays a central role in ciliary beat. Expressed in sperm flagellum, it is required for sperm motility. Dyneins are microtubule-based molecular motors possessing ATPase activities that can convert the chemical energy of ATP into relative sliding between adjacent microtubule doublets to generate ciliary bending. The sequence is that of Dynein axonemal heavy chain 2 from Mus musculus (Mouse).